A 506-amino-acid chain; its full sequence is D-alanine--D-alanyl carrier protein ligase (506 aa).

152–153 serves as a coordination point for ATP; sequence TS. D197 lines the D-alanine pocket. 292-297 contacts ATP; it reads NTYGPT. Position 301 (V301) interacts with D-alanine. Residues D383, 395 to 398, and K494 contribute to the ATP site; that span reads YRGR. Residue K494 coordinates D-alanine.

It belongs to the ATP-dependent AMP-binding enzyme family. DltA subfamily.

It is found in the cytoplasm. The catalysed reaction is holo-[D-alanyl-carrier protein] + D-alanine + ATP = D-alanyl-[D-alanyl-carrier protein] + AMP + diphosphate. It functions in the pathway cell wall biogenesis; lipoteichoic acid biosynthesis. In terms of biological role, catalyzes the first step in the D-alanylation of lipoteichoic acid (LTA), the activation of D-alanine and its transfer onto the D-alanyl carrier protein (Dcp) DltC. In an ATP-dependent two-step reaction, forms a high energy D-alanyl-AMP intermediate, followed by transfer of the D-alanyl residue as a thiol ester to the phosphopantheinyl prosthetic group of the Dcp. D-alanylation of LTA plays an important role in modulating the properties of the cell wall in Gram-positive bacteria, influencing the net charge of the cell wall. This is D-alanine--D-alanyl carrier protein ligase from Lacticaseibacillus casei (strain BL23) (Lactobacillus casei).